Reading from the N-terminus, the 294-residue chain is UDP-3-O-acyl-N-acetylglucosamine deacetylase (294 aa).

Residues His-75, His-232, and Asp-236 each coordinate Zn(2+). Residue His-259 is the Proton donor of the active site.

Belongs to the LpxC family. Requires Zn(2+) as cofactor.

It carries out the reaction a UDP-3-O-[(3R)-3-hydroxyacyl]-N-acetyl-alpha-D-glucosamine + H2O = a UDP-3-O-[(3R)-3-hydroxyacyl]-alpha-D-glucosamine + acetate. Its pathway is glycolipid biosynthesis; lipid IV(A) biosynthesis; lipid IV(A) from (3R)-3-hydroxytetradecanoyl-[acyl-carrier-protein] and UDP-N-acetyl-alpha-D-glucosamine: step 2/6. Functionally, catalyzes the hydrolysis of UDP-3-O-myristoyl-N-acetylglucosamine to form UDP-3-O-myristoylglucosamine and acetate, the committed step in lipid A biosynthesis. The polypeptide is UDP-3-O-acyl-N-acetylglucosamine deacetylase (Campylobacter concisus (strain 13826)).